The primary structure comprises 309 residues: Putative S-adenosyl-L-methionine-dependent methyltransferase Mvan_0104 (309 aa).

S-adenosyl-L-methionine is bound by residues aspartate 134 and 163 to 164 (DL).

Belongs to the UPF0677 family.

Its function is as follows. Exhibits S-adenosyl-L-methionine-dependent methyltransferase activity. This is Putative S-adenosyl-L-methionine-dependent methyltransferase Mvan_0104 from Mycolicibacterium vanbaalenii (strain DSM 7251 / JCM 13017 / BCRC 16820 / KCTC 9966 / NRRL B-24157 / PYR-1) (Mycobacterium vanbaalenii).